We begin with the raw amino-acid sequence, 1040 residues long: Multidrug resistance protein MdtB (1040 aa).

The next 12 helical transmembrane spans lie at 16-36, 347-367, 369-389, 396-416, 440-460, 472-492, 537-557, 863-883, 888-908, 911-931, 968-988, and 998-1018; these read FIMR…AGII, LMMA…NIPA, IIPG…MVFL, LTLM…IVVI, IGFT…PLLF, FAIT…TLTP, WLTL…WVFI, LGST…VLGI, FIHP…ALLA, IAGS…IGIV, ILMT…STGV, and IGMV…TPVI.

It belongs to the resistance-nodulation-cell division (RND) (TC 2.A.6) family. MdtB subfamily. Part of a tripartite efflux system composed of MdtA, MdtB and MdtC. MdtB forms a heteromultimer with MdtC.

It localises to the cell inner membrane. Its function is as follows. The MdtABC tripartite complex confers resistance against novobiocin and deoxycholate. The protein is Multidrug resistance protein MdtB of Escherichia coli O9:H4 (strain HS).